Reading from the N-terminus, the 2499-residue chain is Probable polyketide synthase 23 (2499 aa).

Positions 11-430 constitute a Ketosynthase family 3 (KS3) domain; sequence DNQVAIVGLG…GSNACVLLSE (420 aa). Active-site for beta-ketoacyl synthase activity residues include C177, H316, and H354. Positions 623–656 are acyl/malonyl transferases; sequence GITPSIIVGHSLGEVASAFCSGMIDLETACFVIY. S633 (for acyl/malonyl transferase activity) is an active-site residue. Residues 924-1044 are N-terminal hotdog fold; it reads INQLGNKNEL…SRILMKSLDV (121 aa). In terms of domain architecture, PKS/mFAS DH spans 924 to 1209; it reads INQLGNKNEL…IASTLSTNID (286 aa). Residue H956 is the Proton acceptor; for dehydratase activity of the active site. The C-terminal hotdog fold stretch occupies residues 1059 to 1209; sequence NWSTLKREQL…IASTLSTNID (151 aa). The Proton donor; for dehydratase activity role is filled by D1121. A Carrier domain is found at 2414–2491; it reads EKEFSIRQDI…QIINIVTTKV (78 aa). An O-(pantetheine 4'-phosphoryl)serine modification is found at S2451.

Requires pantetheine 4'-phosphate as cofactor.

Its function is as follows. Probable polyketide synthase. The chain is Probable polyketide synthase 23 (pks23) from Dictyostelium discoideum (Social amoeba).